Here is an 893-residue protein sequence, read N- to C-terminus: AP-4 complex accessory subunit RUSC1 (893 aa).

Disordered stretches follow at residues 31 to 223 (ELRE…GKAE), 237 to 332 (EKTE…KDRS), 339 to 358 (SPDT…APPR), and 366 to 444 (LRSR…RAHA). The span at 77–87 (HGSSIENQQDP) shows a compositional bias: polar residues. 2 stretches are compositionally biased toward low complexity: residues 95-117 (SPSD…DESP) and 149-165 (PSTC…DSCS). Residues 177 to 187 (SNCNALTTCQD) are compositionally biased toward polar residues. Basic and acidic residues predominate over residues 237–257 (EKTEAGWKTIEDSDSGRKTDE). Pro residues-rich tracts occupy residues 373 to 382 (QPPPVPPRDP) and 390 to 399 (PPRPPPPPVP). An interaction with TRAF6 region spans residues 463–598 (MAEAQSGTGQ…FHAFILGLLN (136 aa)). The RUN domain occupies 515–659 (DVGHLVLTTL…LTFHLDLLFE (145 aa)). Residues 599-665 (TKQLELWFSS…LLFEHHHHLP (67 aa)) are interaction with IKBKG. 2 disordered regions span residues 700–721 (RGTS…PAGS) and 751–772 (HGTT…TPGR). 2 stretches are compositionally biased toward low complexity: residues 702-714 (TSGE…STPS) and 754-770 (TAEA…QTTP). The 59-residue stretch at 835–893 (QADRAVRALCDHTAAGPDQLSFQRGELLRVIATVDEDWLRCGRDGVEGLVPVGYTSLVL) folds into the SH3 domain.

As to quaternary structure, associated component of the adapter-like complex 4 (AP-4). Interacts with IKBKG and TRAF6. Interacts with F-actin, acetylated actin, TUBB3, STX1A, KIF5B and KLC1. Phosphorylated on serine residues following nuclear translocation. Post-translationally, polyubiquitinated; polyubiquitination involves TRAF6. In terms of tissue distribution, expressed in brain, brain stem and spinal cord (at protein level).

It localises to the cytoplasm. It is found in the nucleus. Its subcellular location is the cytoskeleton. The protein localises to the cytoplasmic vesicle. The protein resides in the early endosome. It localises to the postsynaptic density. It is found in the golgi apparatus. In terms of biological role, associates with the adapter-like complex 4 (AP-4) and may therefore play a role in vesicular trafficking of proteins at the trans-Golgi network. Signaling adapter which plays a role in neuronal differentiation. Involved in regulation of NGF-dependent neurite outgrowth. May play a role in neuronal vesicular trafficking, specifically involving pre-synaptic membrane proteins. Seems to be involved in signaling pathways that are regulated by the prolonged activation of MAPK. Can regulate the polyubiquitination of IKBKG and thus may be involved in regulation of the NF-kappa-B pathway. This chain is AP-4 complex accessory subunit RUSC1, found in Mus musculus (Mouse).